The primary structure comprises 171 residues: Co-chaperone protein HscB (171 aa).

The J domain occupies 2–74 (DYFTLFGLPA…LTRAEYLLSL (73 aa)).

The protein belongs to the HscB family. Interacts with HscA and stimulates its ATPase activity. Interacts with IscU.

Its function is as follows. Co-chaperone involved in the maturation of iron-sulfur cluster-containing proteins. Seems to help targeting proteins to be folded toward HscA. This Salmonella heidelberg (strain SL476) protein is Co-chaperone protein HscB.